The following is a 1361-amino-acid chain: Cell migration-inducing and hyaluronan-binding protein (1361 aa).

The first 30 residues, 1-30 (MGAAGRQDFLFKAMLTISWLTLTCFPGATS), serve as a signal peptide directing secretion. One can recognise a G8 domain in the interval 44–166 (QPWNPGHDQD…KKLSWTFLNK (123 aa)). Residues Asn-119, Asn-165, Asn-312, Asn-370, and Asn-420 are each glycosylated (N-linked (GlcNAc...) asparagine). One can recognise a GG-type lectin 1 domain in the interval 176-317 (GGYFFERSWG…GEYFNVSLSS (142 aa)). Residues 295 to 591 (AAARVFKLFQ…IHHTFSRCVT (297 aa)) are necessary for its endoplasmic reticulum (ER) retention and interaction with HSPA5. PbH1 repeat units follow at residues 572-594 (DPPT…TVHG), 595-617 (SNGL…FTED), 719-741 (IPLG…IIDN), and 798-819 (GGDV…TLAS). 2 N-linked (GlcNAc...) asparagine glycosylation sites follow: Asn-889 and Asn-921. The GG-type lectin 2 domain maps to 1227–1361 (NDFAYIEVDG…PIPVVKKKKL (135 aa)).

This sequence belongs to the CEMIP family. Interacts with EPHA2 and ITPR3. Interacts with HSPA5/BIP; the interaction induces calcium leakage from the endoplasmic reticulum and cell migration. Interacts with clathrin heavy chain/CLTC. In terms of processing, N-glycosylated; glycosylation is not necessary for HA-binding. Expressed in dermal and in synovial fibroblasts. Strongly expressed in gastric cancers compared with the paired normal tissues. Strongly expressed in both ductal carcinoma and invasive breast cancer cells compared with benign epithelial cells (at protein level). Strongly expressed in brain, placenta, prostate, breast, lung and testis. Expressed in fibroblasts, epithelial cells and cancer cells. In ear, it is specifically expressed in inner ear. Expressed in cochlea and vestibule tissues. Strongly expressed in gastric cancers compared with the paired normal tissues. Strongly expressed in colon adenocarcinomas compared with normal colonic mucosas. Strongly expressed in breast cancer as compared to normal breast tissue.

It localises to the nucleus. The protein localises to the cytoplasm. Its subcellular location is the endoplasmic reticulum. The protein resides in the cell membrane. It is found in the membrane. It localises to the clathrin-coated pit. The protein localises to the secreted. It catalyses the reaction Random hydrolysis of (1-&gt;4)-linkages between N-acetyl-beta-D-glucosamine and D-glucuronate residues in hyaluronate.. Its activity is regulated as follows. Activity is up-regulated by histamine. Functionally, mediates depolymerization of hyaluronic acid (HA) via the cell membrane-associated clathrin-coated pit endocytic pathway. Binds to hyaluronic acid. Hydrolyzes high molecular weight hyaluronic acid to produce an intermediate-sized product, a process that may occur through rapid vesicle endocytosis and recycling without intracytoplasmic accumulation or digestion in lysosomes. Involved in hyaluronan catabolism in the dermis of the skin and arthritic synovium. Positively regulates epithelial-mesenchymal transition (EMT), and hence tumor cell growth, invasion and cancer dissemination. In collaboration with HSPA5/BIP, promotes cancer cell migration in a calcium and PKC-dependent manner. May be involved in hearing. This Homo sapiens (Human) protein is Cell migration-inducing and hyaluronan-binding protein.